The sequence spans 983 residues: Receptor-like protein 19 (983 aa).

Residues 1 to 25 (MMKGYITLSFLIILIFNFLDEFAAS) form the signal peptide. The Extracellular portion of the chain corresponds to 26–937 (TRHLCDPDQS…EEDEEEVISW (912 aa)). Residues N66 and N102 are each glycosylated (N-linked (GlcNAc...) asparagine). LRR repeat units follow at residues 82 to 108 (FGDVIELDLSFSCLRGQLNSNSSLFRL), 111 to 135 (LRFLTTLDLSNNDFIGQIPSSLETL), 136 to 159 (SNLTTLDLSRNHFSGRIPSSIGNL), 161 to 183 (HLIFVDFSHNNFSGQIPSSLGYL), 184 to 207 (SHLTSFNLSYNNFSGRVPSSIGNL), 209 to 231 (YLTTLRLSRNSFFGELPSSLGSL), 232 to 255 (FHLTDLILDTNHFVGKIPSSLGNL), 256 to 281 (SHLTSIDLHKNNFVGEIPFSLGNLSC), 283 to 302 (TSFILSDNNIVGEIPSSFGN), 303 to 327 (LNQLDILNVKSNKLSGSFPIALLNL), 328 to 351 (RKLSTLSLFNNRLTGTLPSNMSSL), 353 to 375 (NLKLFDATENHFTGPLPSSLFNI), 376 to 399 (PSLKTITLENNQLNGSLGFGNISS), 401 to 424 (SNLTVLRLGNNNFRGPIHRSISKL), 425 to 448 (VNLKELDLSNYNTQGLVDFTIFSH), 450 to 474 (KSIEYLNLSHLNTTTTIDMYEILSS), 475 to 498 (FKLLDTLDLSGSHVSTTNKSSLSN), 501 to 524 (LVLISQLYLSGCGITEFPKFLRSQ), 525 to 548 (ELMLTLDISNNKIKGQVPGWLWML), 550 to 571 (VLNYVNLSNNTFIGFERSTKLG), 578 to 602 (PPAMRQLFCSNNNFTGNIPSFICEL), 603 to 628 (PYLSTLDFSNNKFNGSIPTCMGNIQS), 629 to 652 (PYLQALNLRHNRLSGLLPENIFES), 654 to 674 (ISLDVGHNQLVGKLPRSLSHI), 675 to 700 (SSLGLLNVESNKISDTFPLWLSSLQE), 702 to 720 (QVLVLRSNAFYGPIEKTQF), 721 to 744 (SKLRIIDISGNQFNGTLPANFFVN), 793 to 817 (LKVFTVIDFSGNKFEGEIPKSIGLL), 818 to 840 (KELHVLNLSNNALSGHIASSMGN), 841 to 865 (LMALESLDVSQNKLSGEIPQELGKL), and 867 to 890 (YLAYMNFSHNQLVGLLPGGTQFQT). N137, N158, N171, N190, N195, and N206 each carry an N-linked (GlcNAc...) asparagine glycan. 2 N-linked (GlcNAc...) asparagine glycosylation sites follow: N254 and N278. A glycan (N-linked (GlcNAc...) asparagine) is linked at N347. Residues N389, N396, and N402 are each glycosylated (N-linked (GlcNAc...) asparagine). 4 N-linked (GlcNAc...) asparagine glycosylation sites follow: N456, N461, N492, and N498. N-linked (GlcNAc...) asparagine glycans are attached at residues N555, N558, N590, and N616. N-linked (GlcNAc...) asparagine glycosylation is found at N734 and N744. Residue N824 is glycosylated (N-linked (GlcNAc...) asparagine). An N-linked (GlcNAc...) asparagine glycan is attached at N872. A helical membrane pass occupies residues 938–958 (IAAVIGFILGTALGLTFGCIL). Residues 959-983 (FSYKPDWFKNPFVRDKRRNIGTITH) lie on the Cytoplasmic side of the membrane.

The protein belongs to the RLP family.

The protein resides in the cell membrane. In Arabidopsis thaliana (Mouse-ear cress), this protein is Receptor-like protein 19.